Here is a 209-residue protein sequence, read N- to C-terminus: MAKTHEIKVERRADEGKGASRRLRHAGVIPAIVYGGELEPVSIQLNHEQIWLAQQNEWFYSSILDLNLNGDVQQVLLRDMQRHPFKQLIMHIDFQRVSANEKLSASVPLHFINEASSPAGKSSEVVVTHELNEVQVVCLPKDLPEFIEIDLSTLEVGAVIHLSEITLPAGVEIPELKLGKEHDVAVVIAKHGQVEADDVADEAAEGDAK.

Belongs to the bacterial ribosomal protein bL25 family. CTC subfamily. In terms of assembly, part of the 50S ribosomal subunit; part of the 5S rRNA/L5/L18/L25 subcomplex. Contacts the 5S rRNA. Binds to the 5S rRNA independently of L5 and L18.

In terms of biological role, this is one of the proteins that binds to the 5S RNA in the ribosome where it forms part of the central protuberance. This is Large ribosomal subunit protein bL25 from Xanthomonas campestris pv. campestris (strain B100).